Here is a 460-residue protein sequence, read N- to C-terminus: Phosphoglucosamine mutase (460 aa).

Serine 102 acts as the Phosphoserine intermediate in catalysis. The Mg(2+) site is built by serine 102, aspartate 241, aspartate 243, and aspartate 245. Serine 102 carries the phosphoserine modification.

The protein belongs to the phosphohexose mutase family. Requires Mg(2+) as cofactor. Activated by phosphorylation.

The enzyme catalyses alpha-D-glucosamine 1-phosphate = D-glucosamine 6-phosphate. Functionally, catalyzes the conversion of glucosamine-6-phosphate to glucosamine-1-phosphate. The polypeptide is Phosphoglucosamine mutase (Verminephrobacter eiseniae (strain EF01-2)).